Reading from the N-terminus, the 294-residue chain is Elongation factor Ts (294 aa).

Residues 79 to 82 (TDFV) form an involved in Mg(2+) ion dislocation from EF-Tu region.

This sequence belongs to the EF-Ts family.

It is found in the cytoplasm. Associates with the EF-Tu.GDP complex and induces the exchange of GDP to GTP. It remains bound to the aminoacyl-tRNA.EF-Tu.GTP complex up to the GTP hydrolysis stage on the ribosome. This chain is Elongation factor Ts, found in Oceanobacillus iheyensis (strain DSM 14371 / CIP 107618 / JCM 11309 / KCTC 3954 / HTE831).